Consider the following 317-residue polypeptide: UDP-3-O-acylglucosamine N-acyltransferase (317 aa).

Histidine 229 acts as the Proton acceptor in catalysis.

This sequence belongs to the transferase hexapeptide repeat family. LpxD subfamily. As to quaternary structure, homotrimer.

The catalysed reaction is a UDP-3-O-[(3R)-3-hydroxyacyl]-alpha-D-glucosamine + a (3R)-hydroxyacyl-[ACP] = a UDP-2-N,3-O-bis[(3R)-3-hydroxyacyl]-alpha-D-glucosamine + holo-[ACP] + H(+). It functions in the pathway bacterial outer membrane biogenesis; LPS lipid A biosynthesis. Catalyzes the N-acylation of UDP-3-O-acylglucosamine using 3-hydroxyacyl-ACP as the acyl donor. Is involved in the biosynthesis of lipid A, a phosphorylated glycolipid that anchors the lipopolysaccharide to the outer membrane of the cell. The sequence is that of UDP-3-O-acylglucosamine N-acyltransferase from Campylobacter concisus (strain 13826).